Here is a 121-residue protein sequence, read N- to C-terminus: Lysozyme (121 aa).

The 121-residue stretch at 1-121 folds into the C-type lysozyme domain; the sequence is KTFTRCELVQ…NKPLPDISKC (121 aa). 4 disulfide bridges follow: Cys-6–Cys-121, Cys-27–Cys-110, Cys-62–Cys-76, and Cys-72–Cys-90. Residues Glu-32 and Asp-50 contribute to the active site.

It belongs to the glycosyl hydrolase 22 family.

It carries out the reaction Hydrolysis of (1-&gt;4)-beta-linkages between N-acetylmuramic acid and N-acetyl-D-glucosamine residues in a peptidoglycan and between N-acetyl-D-glucosamine residues in chitodextrins.. Lysozymes have primarily a bacteriolytic function; those in tissues and body fluids are associated with the monocyte-macrophage system and enhance the activity of immunoagents. The chain is Lysozyme from Galleria mellonella (Greater wax moth).